Here is a 319-residue protein sequence, read N- to C-terminus: MANRSHHNAGHRAMNALRKSGQKHSSESQLGSSEIGTTRHVYDVCDCLDTLAKLPDDSVQLIICDPPYNIMLADWDDHMDYIGWAKRWLAEAERVLSPTGSIAIFGGLQYQGEAGSGDLISIISHMRQNSKMLLANLIIWNYPNGMSAQRFFANRHEEIAWFAKTKKYFFDLDAVREPYDEETKAAYMKDKRLNPESVEKGRNPTNVWRMSRLNGNSLERVGHPTQKPAAVIERLVRALSHPGSTVLDFFAGSGVTARVAIQEGRNSICTDAAPVFKEYYQKQLTFLQDDGLIDKARSYEIVEGAANFGAALQRGDVAS.

Over residues 1-10 the composition is skewed to basic residues; that stretch reads MANRSHHNAG. The interval 1–32 is disordered; the sequence is MANRSHHNAGHRAMNALRKSGQKHSSESQLGS.

Belongs to the N(4)/N(6)-methyltransferase family.

The enzyme catalyses a 2'-deoxyadenosine in DNA + S-adenosyl-L-methionine = an N(6)-methyl-2'-deoxyadenosine in DNA + S-adenosyl-L-homocysteine + H(+). With respect to regulation, strongly inhibited by N-ethylmaleimide, inactivated by MgCl(2) or MgSO(4). In terms of biological role, a beta subtype methylase, recognizes the double-stranded sequence 5'-GAATTC-3', methylates A-3 on both strands, and protects the DNA from cleavage by the RsrI endonuclease. The sequence is that of Type II methyltransferase M.RsrI from Cereibacter sphaeroides (Rhodobacter sphaeroides).